The primary structure comprises 207 residues: Protein phosphatase inhibitor 2 (207 aa).

3 disordered regions span residues 1 to 44 (MAAS…SKKS), 65 to 97 (LMKI…ALTP), and 110 to 146 (ESLE…EMKR). Position 2 is an N-acetylalanine (Ala2). The segment at 12 to 17 (KGILKN) is required for binding PPP1CC. Residues 19-28 (SSTTSSVVST) are compositionally biased toward low complexity. Residues 35–44 (SVDEELSKKS) are compositionally biased toward basic and acidic residues. A required for binding PPP1CC region spans residues 43-55 (KSQKWDEMSILAT). Ser44 carries the phosphoserine; by ATM modification. Residue Thr73 is modified to Phosphothreonine; by GSK3. A compositionally biased stretch (acidic residues) spans 80 to 91 (ADDEDALSDSET). Phosphoserine occurs at positions 87 and 89. Thr92 and Thr96 each carry phosphothreonine. Positions 112-122 (LEPKYRVREQE) are enriched in basic and acidic residues. Ser123, Ser124, Ser129, and Ser132 each carry phosphoserine. Residues 123-132 (SSGDEDSDLS) are compositionally biased toward acidic residues. The span at 133 to 145 (PEEREKKRQFEMK) shows a compositional bias: basic and acidic residues. Residues 149-152 (HYNE) are required for binding PPP1CC catalytic center, displacing metal ions and inhibition of PPP1CC catalytic activity. A disordered region spans residues 165 to 207 (KDLNDEEEDEEMSETAAGESMNMEESSQGSATSDQLQNKSQSS). The segment covering 168-177 (NDEEEDEEMS) has biased composition (acidic residues). Polar residues predominate over residues 187–207 (MEESSQGSATSDQLQNKSQSS).

Belongs to the protein phosphatase inhibitor 2 family. In terms of assembly, heterodimer with PP1. Phosphorylation on Ser-44 by ATM activates PP1 by dissociating the PP1-PPP1R2 complex. Phosphorylation on Thr-73 by GSK3 activates PP1 by dissociating the PP1-PPP1R2 complex.

Its function is as follows. Inhibitor of protein-phosphatase 1. This chain is Protein phosphatase inhibitor 2 (PPP1R2), found in Bos taurus (Bovine).